A 104-amino-acid polypeptide reads, in one-letter code: Large ribosomal subunit protein uL23 (104 aa).

Belongs to the universal ribosomal protein uL23 family. Part of the 50S ribosomal subunit. Contacts protein L29, and trigger factor when it is bound to the ribosome.

One of the early assembly proteins it binds 23S rRNA. One of the proteins that surrounds the polypeptide exit tunnel on the outside of the ribosome. Forms the main docking site for trigger factor binding to the ribosome. The chain is Large ribosomal subunit protein uL23 from Paraburkholderia phytofirmans (strain DSM 17436 / LMG 22146 / PsJN) (Burkholderia phytofirmans).